The following is a 320-amino-acid chain: Taurine-binding periplasmic protein (320 aa).

Positions 1–22 (MAISSRNTLLAALAFIAFQAQA) are cleaved as a signal peptide.

Belongs to the bacterial solute-binding protein SsuA/TauA family.

It localises to the periplasm. Functionally, part of a binding-protein-dependent transport system for taurine. This is Taurine-binding periplasmic protein (tauA) from Escherichia coli (strain K12).